Here is a 195-residue protein sequence, read N- to C-terminus: Early light-induced protein 1, chloroplastic (195 aa).

The transit peptide at M1–M46 directs the protein to the chloroplast. The disordered stretch occupies residues M46–K81. Residues S56–L68 show a composition bias toward low complexity. Pro residues predominate over residues P69–K79. A run of 3 helical transmembrane segments spans residues L104 to L124, G131 to F151, and F175 to V195.

The protein belongs to the ELIP/psbS family.

It is found in the plastid. Its subcellular location is the chloroplast thylakoid membrane. Its function is as follows. Prevents excess accumulation of free chlorophyll by inhibiting the entire chlorophyll biosynthesis pathway (e.g. 5-aminolevulinate synthesis and Mg-protoporphyrin IX chelatase activity), and hence prevent photooxidative stress. Probably involved in the integration of pigments into the mature light-harvesting pigment-protein complexes. Light-harvesting chlorophyll (LHC) a/b-binding protein required to ensure a high rate of chlorophyll accumulation during deetiolation in continuous high light. Involved in seed germination. May fulfill a photoprotective functions. The protein is Early light-induced protein 1, chloroplastic of Arabidopsis thaliana (Mouse-ear cress).